The sequence spans 315 residues: ADP/ATP translocase 4 (315 aa).

Topologically, residues 1-19 (MHREPPKKKAEKRLFDASS) are mitochondrial intermembrane. A Solcar 1 repeat occupies 18–110 (SSFGKDLLAG…FAFKDKYKQL (93 aa)). The chain crosses the membrane as a helical span at residues 20–49 (FGKDLLAGGVAAAVSKTAVAPIERVKLLLQ). Residues 50 to 86 (VQASSKQISPEARYKGMVDCLVRIPREQGFFSFWRGN) are Mitochondrial matrix-facing. A helical membrane pass occupies residues 87–111 (LANVIRYFPTQALNFAFKDKYKQLF). ADP is bound by residues R92 and K104. At 112–121 (MSGVNKEKQF) the chain is on the mitochondrial intermembrane side. Residues 122-142 (WRWFLANLASGGAAGATSLCV) traverse the membrane as a helical segment. Solcar repeat units follow at residues 123-213 (RWFL…VKGL) and 220-307 (TPFL…IKEF). The Mitochondrial matrix portion of the chain corresponds to 143–190 (VYPLDFARTRLGVDIGKGPEERQFKGLGDCIMKIAKSDGIAGLYQGFG). The helical transmembrane segment at 191–211 (VSVQGIIVYRASYFGAYDTVK) threads the bilayer. Topologically, residues 212-222 (GLLPKPKKTPF) are mitochondrial intermembrane. The chain crosses the membrane as a helical span at residues 223–243 (LVSFFIAQVVTTCSGILSYPF). Over 244-283 (DTVRRRMMMQSGEAKRQYKGTLDCFVKIYQHEGINSFFRG) the chain is Mitochondrial matrix. R247 is a binding site for ADP. The tract at residues 247–252 (RRRMMM) is important for transport activity. Residues 247-252 (RRRMMM) carry the Nucleotide carrier signature motif motif. The chain crosses the membrane as a helical span at residues 284 to 301 (AFSNVLRGTGGALVLVLY). Over 302–315 (DKIKEFFHIDIGGR) the chain is Mitochondrial intermembrane.

This sequence belongs to the mitochondrial carrier (TC 2.A.29) family. As to quaternary structure, monomer.

The protein resides in the mitochondrion inner membrane. The protein localises to the membrane. Its subcellular location is the cell projection. It is found in the cilium. It localises to the flagellum membrane. It catalyses the reaction ADP(in) + ATP(out) = ADP(out) + ATP(in). The enzyme catalyses dATP(out) + ADP(in) = dATP(in) + ADP(out). The catalysed reaction is dADP(in) + ADP(out) = dADP(out) + ADP(in). It carries out the reaction H(+)(in) = H(+)(out). The matrix-open state (m-state) is inhibited by the membrane-permeable bongkrekic acid (BKA). The cytoplasmic-open state (c-state) is inhibited by the membrane-impermeable toxic inhibitor carboxyatractyloside (CATR). Proton transporter activity is inhibited by ADP:ATP antiporter activity. Functionally, ADP:ATP antiporter that mediates import of ADP into the mitochondrial matrix for ATP synthesis, and export of ATP out to fuel the cell. Cycles between the cytoplasmic-open state (c-state) and the matrix-open state (m-state): operates by the alternating access mechanism with a single substrate-binding site intermittently exposed to either the cytosolic (c-state) or matrix (m-state) side of the inner mitochondrial membrane. Specifically required during spermatogenesis, probably to mediate ADP:ATP exchange in spermatocytes. Large ATP supplies from mitochondria may be critical for normal progression of spermatogenesis during early stages of meiotic prophase I, including DNA double-strand break repair and chromosomal synapsis. In addition to its ADP:ATP antiporter activity, also involved in mitochondrial uncoupling and mitochondrial permeability transition pore (mPTP) activity. Plays a role in mitochondrial uncoupling by acting as a proton transporter: proton transport uncouples the proton flows via the electron transport chain and ATP synthase to reduce the efficiency of ATP production and cause mitochondrial thermogenesis. Proton transporter activity is inhibited by ADP:ATP antiporter activity, suggesting that SLC25A31/ANT4 acts as a master regulator of mitochondrial energy output by maintaining a delicate balance between ATP production (ADP:ATP antiporter activity) and thermogenesis (proton transporter activity). Proton transporter activity requires free fatty acids as cofactor, but does not transport it. Among nucleotides, may also exchange ADP for dATP and dADP. Also plays a key role in mPTP opening, a non-specific pore that enables free passage of the mitochondrial membranes to solutes of up to 1.5 kDa, and which contributes to cell death. It is however unclear if SLC25A31/ANT4 constitutes a pore-forming component of mPTP or regulates it. The protein is ADP/ATP translocase 4 of Macaca fascicularis (Crab-eating macaque).